Consider the following 509-residue polypeptide: Heat shock 70 kDa protein 14 (509 aa).

This sequence belongs to the heat shock protein 70 family. In terms of assembly, component of ribosome-associated complex (RAC), a heterodimer composed of Hsp70/DnaK-type chaperone HSPA14 and Hsp40/DnaJ-type chaperone DNAJC2.

Its subcellular location is the cytoplasm. It is found in the cytosol. Its function is as follows. Component of the ribosome-associated complex (RAC), a complex involved in folding or maintaining nascent polypeptides in a folding-competent state. In the RAC complex, binds to the nascent polypeptide chain, while DNAJC2 stimulates its ATPase activity. This chain is Heat shock 70 kDa protein 14 (Hspa14), found in Rattus norvegicus (Rat).